The following is a 156-amino-acid chain: Cyanate hydratase (156 aa).

Active-site residues include R96, E99, and S122.

It belongs to the cyanase family.

It catalyses the reaction cyanate + hydrogencarbonate + 3 H(+) = NH4(+) + 2 CO2. In terms of biological role, catalyzes the reaction of cyanate with bicarbonate to produce ammonia and carbon dioxide. This chain is Cyanate hydratase, found in Pseudomonas paraeruginosa (strain DSM 24068 / PA7) (Pseudomonas aeruginosa (strain PA7)).